The sequence spans 115 residues: Probable 4-amino-4-deoxy-L-arabinose-phosphoundecaprenol flippase subunit ArnE (115 aa).

Transmembrane regions (helical) follow at residues 42 to 62 (PWPW…LLLL), 65 to 85 (VEVG…TLAA), and 93 to 112 (VDRR…VLLG). Positions 46-113 (LALLALGLGL…IVAGVVLLGR (68 aa)) constitute an EamA domain.

This sequence belongs to the ArnE family. Heterodimer of ArnE and ArnF.

Its subcellular location is the cell inner membrane. It functions in the pathway bacterial outer membrane biogenesis; lipopolysaccharide biosynthesis. Its function is as follows. Translocates 4-amino-4-deoxy-L-arabinose-phosphoundecaprenol (alpha-L-Ara4N-phosphoundecaprenol) from the cytoplasmic to the periplasmic side of the inner membrane. This Pseudomonas aeruginosa (strain UCBPP-PA14) protein is Probable 4-amino-4-deoxy-L-arabinose-phosphoundecaprenol flippase subunit ArnE.